Consider the following 812-residue polypeptide: Mitochondrial intermediate peptidase (812 aa).

A mitochondrion-targeting transit peptide spans 1-35 (MLKLLRPRPWVCNSCLNRVAFPKPYPVGSRSTRWL). The segment at 518 to 544 (STSEGGPAFGSPESAANDGMAASRGAS) is disordered. His587 lines the Zn(2+) pocket. Glu588 is an active-site residue. Residues His591 and His594 each coordinate Zn(2+).

The protein belongs to the peptidase M3 family. It depends on Zn(2+) as a cofactor.

Its subcellular location is the mitochondrion matrix. The catalysed reaction is Release of an N-terminal octapeptide as second stage of processing of some proteins imported into the mitochondrion.. Its function is as follows. Cleaves proteins, imported into the mitochondrion, to their mature size. While most mitochondrial precursor proteins are processed to the mature form in one step by mitochondrial processing peptidase (MPP), the sequential cleavage by MIP of an octapeptide after initial processing by MPP is a required step for a subgroup of nuclear-encoded precursor proteins destined for the matrix or the inner membrane. The polypeptide is Mitochondrial intermediate peptidase (OCT1) (Pyricularia oryzae (strain 70-15 / ATCC MYA-4617 / FGSC 8958) (Rice blast fungus)).